The following is a 146-amino-acid chain: Large ribosomal subunit protein uL15 (146 aa).

Residues 1-51 (MKLHELKPAKGSRKVRNRVGRGTSSGNGKTSGRGQKGQKARSGGGVRLGFE) are disordered. The span at 10-19 (KGSRKVRNRV) shows a compositional bias: basic residues. 2 stretches are compositionally biased toward gly residues: residues 23-35 (TSSG…GRGQ) and 42-51 (SGGGVRLGFE).

It belongs to the universal ribosomal protein uL15 family. Part of the 50S ribosomal subunit.

In terms of biological role, binds to the 23S rRNA. In Streptococcus equi subsp. equi (strain 4047), this protein is Large ribosomal subunit protein uL15.